Consider the following 152-residue polypeptide: Large ribosomal subunit protein uL22 (152 aa).

The protein belongs to the universal ribosomal protein uL22 family. As to quaternary structure, part of the 50S ribosomal subunit.

Functionally, this protein binds specifically to 23S rRNA. It makes multiple contacts with different domains of the 23S rRNA in the assembled 50S subunit and ribosome. Its function is as follows. The globular domain of the protein is located near the polypeptide exit tunnel on the outside of the subunit, while an extended beta-hairpin is found that lines the wall of the exit tunnel in the center of the 70S ribosome. The chain is Large ribosomal subunit protein uL22 from Cenarchaeum symbiosum (strain A).